Reading from the N-terminus, the 207-residue chain is Nuclear transcription factor Y subunit beta (207 aa).

Residues 1–52 (MTMDGDSSTTDASQLGISADYIGGSHYVIQPHDDTEDSMNDHEDTNGSKESF) are a domain. Residues 27–52 (YVIQPHDDTEDSMNDHEDTNGSKESF) form a disordered region. Residues 39 to 52 (MNDHEDTNGSKESF) are compositionally biased toward basic and acidic residues. Residues 53-142 (REQDIYLPIA…PLKLYLQKFR (90 aa)) are b domain. The DNA-binding element occupies 59–65 (LPIANVA). The interval 86-97 (VQECVSEFISFI) is subunit association domain (SAD). Residue Lys-140 forms a Glycyl lysine isopeptide (Lys-Gly) (interchain with G-Cter in ubiquitin) linkage. Residues 143–207 (EAMKGEKGIG…ISGVQQIQFS (65 aa)) are c domain.

The protein belongs to the NFYB/HAP3 subunit family. Heterotrimeric transcription factor composed of three components, NF-YA, NF-YB and NF-YC. NF-YB and NF-YC must interact and dimerize for NF-YA association and DNA binding. Interacts with C1QBP. In terms of processing, monoubiquitination at Lys-140 plays an important role in transcriptional activation by allowing the deposition of histone H3 methylations as well as histone H2B monoubiquitination at 'Lys-121'.

The protein localises to the nucleus. In terms of biological role, component of the sequence-specific heterotrimeric transcription factor (NF-Y) which specifically recognizes a 5'-CCAAT-3' box motif found in the promoters of its target genes. NF-Y can function as both an activator and a repressor, depending on its interacting cofactors. The protein is Nuclear transcription factor Y subunit beta (Nfyb) of Mus musculus (Mouse).